Consider the following 210-residue polypeptide: MGLKPLVIGITGGSGSGKTTVSRELVRRLTEDGSSAILLQQDSYYKDQSDKPMSERVKTNYDHPDSFETDLFVSDLRRLLRHEAISKPIYDYPNHTRAKEVEPVEPADVIIVDGVLLFNDSRVRDLLDMKIFVDTDDDIRFLRRLERDIDERGRTVRGVIDQYLATVKPMYHQFVEPTKRYANIIVPEGGENLVAIDMLTNQAKAMLKQN.

G12 to T19 serves as a coordination point for ATP.

It belongs to the uridine kinase family.

The protein localises to the cytoplasm. The catalysed reaction is uridine + ATP = UMP + ADP + H(+). It catalyses the reaction cytidine + ATP = CMP + ADP + H(+). It participates in pyrimidine metabolism; CTP biosynthesis via salvage pathway; CTP from cytidine: step 1/3. It functions in the pathway pyrimidine metabolism; UMP biosynthesis via salvage pathway; UMP from uridine: step 1/1. The sequence is that of Uridine kinase from Leuconostoc citreum (strain KM20).